The primary structure comprises 636 residues: LEAF RUST 10 DISEASE-RESISTANCE LOCUS RECEPTOR-LIKE PROTEIN KINASE-like 1.5 (636 aa).

Positions 1-26 (MSQPPWRCFSLLIFVLTIFSTKPSSA) are cleaved as a signal peptide. Over 27–257 (STSCSSSFHC…NNKRVNHIAV (231 aa)) the chain is Extracellular. Residues Asn73, Asn102, Asn146, and Asn224 are each glycosylated (N-linked (GlcNAc...) asparagine). Residues 258–278 (LSLIFALTCLLLVFSVAVAIF) traverse the membrane as a helical segment. At 279–636 (RSRRASFLSS…RVADDDVAKN (358 aa)) the chain is on the cytoplasmic side. The region spanning 324–628 (FDPKRKIGDG…LRRIRSHTRV (305 aa)) is the Protein kinase domain. ATP is bound by residues 330-338 (IGDGGFGSV) and Lys352. Catalysis depends on Asp458, which acts as the Proton acceptor.

This sequence belongs to the protein kinase superfamily. Ser/Thr protein kinase family.

It localises to the cell membrane. It carries out the reaction L-seryl-[protein] + ATP = O-phospho-L-seryl-[protein] + ADP + H(+). It catalyses the reaction L-threonyl-[protein] + ATP = O-phospho-L-threonyl-[protein] + ADP + H(+). This Arabidopsis thaliana (Mouse-ear cress) protein is LEAF RUST 10 DISEASE-RESISTANCE LOCUS RECEPTOR-LIKE PROTEIN KINASE-like 1.5.